The primary structure comprises 135 residues: Glutaredoxin-C4 (135 aa).

The region spanning 32–132 (ADFVKKTISS…KLLGVSGNKE (101 aa)) is the Glutaredoxin domain. A disulfide bond links C52 and C55.

The protein belongs to the glutaredoxin family. CPYC subfamily.

It is found in the cytoplasm. Its function is as follows. Has a glutathione-disulfide oxidoreductase activity in the presence of NADPH and glutathione reductase. Reduces low molecular weight disulfides and proteins. The sequence is that of Glutaredoxin-C4 (GRXC4) from Arabidopsis thaliana (Mouse-ear cress).